The primary structure comprises 559 residues: Transmembrane E3 ubiquitin-protein ligase FLY2 (559 aa).

An N-terminal signal peptide occupies residues M1 to G29. The Lumenal segment spans residues L30–N259. The helical transmembrane segment at K260–I280 threads the bilayer. At R281–K294 the chain is on the cytoplasmic side. A helical transmembrane segment spans residues V295–L315. The Lumenal segment spans residues T316–G318. Residues I319 to F339 form a helical membrane-spanning segment. At S340 to L370 the chain is on the cytoplasmic side. Residues S371–F391 form a helical membrane-spanning segment. Topologically, residues H392–Y394 are lumenal. The chain crosses the membrane as a helical span at residues M395–V415. Topologically, residues R416 to H423 are cytoplasmic. A helical transmembrane segment spans residues P424 to C444. The Lumenal portion of the chain corresponds to P445 to C458. The chain crosses the membrane as a helical span at residues V459 to G479. At S480 to A559 the chain is on the cytoplasmic side. Residues C509 to R553 form an RING-type; atypical zinc finger.

As to expression, highly expressed in stems. Expressed in root xylem and seed coat.

The protein resides in the endomembrane system. The enzyme catalyses S-ubiquitinyl-[E2 ubiquitin-conjugating enzyme]-L-cysteine + [acceptor protein]-L-lysine = [E2 ubiquitin-conjugating enzyme]-L-cysteine + N(6)-ubiquitinyl-[acceptor protein]-L-lysine.. Its pathway is protein modification; protein ubiquitination. Functionally, E3 ubiquitin-protein ligase that may be involved in xylem development. In Arabidopsis thaliana (Mouse-ear cress), this protein is Transmembrane E3 ubiquitin-protein ligase FLY2.